Consider the following 206-residue polypeptide: Large ribosomal subunit protein uL4 (206 aa).

A disordered region spans residues 45–76; that stretch reads RQGNQSAKTRAEVSGGGKKPWRQKGTGRARQG.

It belongs to the universal ribosomal protein uL4 family. Part of the 50S ribosomal subunit.

Functionally, one of the primary rRNA binding proteins, this protein initially binds near the 5'-end of the 23S rRNA. It is important during the early stages of 50S assembly. It makes multiple contacts with different domains of the 23S rRNA in the assembled 50S subunit and ribosome. Forms part of the polypeptide exit tunnel. This Clostridium novyi (strain NT) protein is Large ribosomal subunit protein uL4.